The chain runs to 346 residues: Protein RecA (346 aa).

67-74 serves as a coordination point for ATP; that stretch reads GPESSGKT.

Belongs to the RecA family.

The protein localises to the cytoplasm. Functionally, can catalyze the hydrolysis of ATP in the presence of single-stranded DNA, the ATP-dependent uptake of single-stranded DNA by duplex DNA, and the ATP-dependent hybridization of homologous single-stranded DNAs. It interacts with LexA causing its activation and leading to its autocatalytic cleavage. The sequence is that of Protein RecA from Saccharopolyspora erythraea (strain ATCC 11635 / DSM 40517 / JCM 4748 / NBRC 13426 / NCIMB 8594 / NRRL 2338).